A 117-amino-acid chain; its full sequence is NADH-ubiquinone oxidoreductase chain 3 (117 aa).

The next 3 membrane-spanning stretches (helical) occupy residues 4–24 (IILIASLILTIVTIVMFLASI), 60–80 (ITIIFLIFDVEIALILPMIII), and 86–106 (IMIWTTTSIIFILILLIGLYH).

It belongs to the complex I subunit 3 family.

The protein resides in the mitochondrion membrane. It carries out the reaction a ubiquinone + NADH + 5 H(+)(in) = a ubiquinol + NAD(+) + 4 H(+)(out). Core subunit of the mitochondrial membrane respiratory chain NADH dehydrogenase (Complex I) that is believed to belong to the minimal assembly required for catalysis. Complex I functions in the transfer of electrons from NADH to the respiratory chain. The immediate electron acceptor for the enzyme is believed to be ubiquinone. In Drosophila subobscura (Fruit fly), this protein is NADH-ubiquinone oxidoreductase chain 3 (mt:ND3).